Consider the following 84-residue polypeptide: Small ribosomal subunit protein bS20 (84 aa).

A disordered region spans residues 1-22; sequence MPAPTKRERQNRKRFERNRSVR. Residues 9–22 show a composition bias toward basic residues; that stretch reads RQNRKRFERNRSVR.

This sequence belongs to the bacterial ribosomal protein bS20 family.

Its function is as follows. Binds directly to 16S ribosomal RNA. In Rubrobacter xylanophilus (strain DSM 9941 / JCM 11954 / NBRC 16129 / PRD-1), this protein is Small ribosomal subunit protein bS20.